The chain runs to 727 residues: C-terminal-binding protein 1 (727 aa).

Residues 5–60 form a THAP-type zinc finger; it reads CGFPNCKFRSRYRGLEDNRHFYRIPKRPLILRQRWLTAIGRTEETVVSQLRICSAH. Residues 64–158 are disordered; the sequence is GEKKEGDIPV…HPPVLPDPQQ (95 aa). Residues 77–94 show a composition bias toward basic and acidic residues; the sequence is TVDKQIKIELPPKESKNS. NAD(+) is bound by residues tyrosine 251, 331–336, aspartate 355, 388–394, 415–417, aspartate 441, and 467–470; these read LGCGRV, CNLGDET, TSH, and HSAW. A compositionally biased stretch (low complexity) spans 587–613; it reads ANAQRGSPANRSSRSSPSPHTNKSSVS. Disordered stretches follow at residues 587–629 and 652–681; these read ANAQ…SPAA and APNGDSGASTADSGIEGGDKEKVQSDGDEN.

This sequence belongs to the D-isomer specific 2-hydroxyacid dehydrogenase family. In terms of assembly, homodimer.

In terms of biological role, binds DNA and represses gene expression. Plays a role in regulation of life span, possibly by regulating transcription of genes important for lipid metabolism. The protein is C-terminal-binding protein 1 of Caenorhabditis elegans.